A 402-amino-acid chain; its full sequence is Plasminogen activator inhibitor 1 (402 aa).

The signal sequence occupies residues 1 to 23; that stretch reads MRMSPVFACLALGLALIFGEGSA. Residues asparagine 232, asparagine 288, and asparagine 352 are each glycosylated (N-linked (GlcNAc...) asparagine).

The protein belongs to the serpin family. In terms of assembly, forms a heterodimer with TMPRSS7. Interacts with VTN. Binds LRP1B; binding is followed by internalization and degradation. Interacts with PPP1CB. In complex with PLAU/uPA, interacts with PLAUR/uPAR. Interacts with SORL1 and LRP1, either alone or in complex with PLAU; these interactions are abolished in the presence of LRPAP1/RAP. The ternary complex composed of PLAUR-PLAU-PAI1 also interacts with SORL1. Interacts with PLAT/tPA. Also interacts with SORL1, when complexed to PLAT/tPA. As to expression, vascular endothelial cells may be the primary site of synthesis of plasma PAI1.

Its subcellular location is the secreted. Serine protease inhibitor. Inhibits TMPRSS7. Is a primary inhibitor of tissue-type plasminogen activator (PLAT) and urokinase-type plasminogen activator (PLAU). As PLAT inhibitor, it is required for fibrinolysis down-regulation and is responsible for the controlled degradation of blood clots. As PLAU inhibitor, it is involved in the regulation of cell adhesion and spreading. Acts as a regulator of cell migration, independently of its role as protease inhibitor. It is required for stimulation of keratinocyte migration during cutaneous injury repair. It is involved in cellular and replicative senescence. Plays a role in alveolar type 2 cells senescence in the lung. Is involved in the regulation of cementogenic differentiation of periodontal ligament stem cells, and regulates odontoblast differentiation and dentin formation during odontogenesis. This Bos taurus (Bovine) protein is Plasminogen activator inhibitor 1 (SERPINE1).